Consider the following 512-residue polypeptide: PTS system mannitol-specific EIICB component (512 aa).

Residues Met1–Asn28 are Cytoplasmic-facing. Residues Phe17–Asp349 enclose the PTS EIIC type-2 domain. The chain crosses the membrane as a helical span at residues Ile29–Asn50. Over Lys51 to Ala54 the chain is Extracellular. Residues Thr55–Arg75 form a helical membrane-spanning segment. The Cytoplasmic segment spans residues Leu76–Phe139. Residues Ser140–Lys161 traverse the membrane as a helical segment. Residues Phe162–Ala170 are Extracellular-facing. The helical transmembrane segment at Val171–Lys191 threads the bilayer. Residues Ile192 to Ala278 lie on the Cytoplasmic side of the membrane. Residues Val279 to Lys298 traverse the membrane as a helical segment. At Ser299 to Phe318 the chain is on the extracellular side. The helical transmembrane segment at Leu319–Met340 threads the bilayer. Residues Lys341–Ala512 are Cytoplasmic-facing. A disordered region spans residues Ala355–Leu402. A compositionally biased stretch (low complexity) spans Ser365–Lys376. Polar residues predominate over residues Thr380–Ser392. Residues Asn419–Ala512 form the PTS EIIB type-2 domain. Cys425 (phosphocysteine intermediate; for EIIB activity) is an active-site residue. Cys425 is modified (phosphocysteine; by EIIA).

As to quaternary structure, homodimer.

Its subcellular location is the cell membrane. It catalyses the reaction D-mannitol(out) + N(pros)-phospho-L-histidyl-[protein] = D-mannitol 1-phosphate(in) + L-histidyl-[protein]. In terms of biological role, the phosphoenolpyruvate-dependent sugar phosphotransferase system (sugar PTS), a major carbohydrate active transport system, catalyzes the phosphorylation of incoming sugar substrates concomitantly with their translocation across the cell membrane. The enzyme II CmtAB PTS system is involved in D-mannitol transport. The chain is PTS system mannitol-specific EIICB component (mtlA) from Staphylococcus aureus (strain COL).